We begin with the raw amino-acid sequence, 454 residues long: Epsin-1 (454 aa).

An ENTH domain is found at 11–143 (NLVKGYSSTQ…SDDERLNEER (133 aa)). Disordered regions lie at residues 142–195 (ERNM…EDYE) and 292–350 (YLAS…GNQS). Over residues 149–160 (GRNRKGRRRRGT) the composition is skewed to basic residues. Thr160 carries the post-translational modification Phosphothreonine. A Phosphoserine modification is found at Ser163. 2 consecutive UIM domains span residues 165-184 (ENDD…AEED) and 189-208 (KQDE…EELK). Residue Thr180 is modified to Phosphothreonine. Residues 180-191 (TAEEDERRRKQD) are compositionally biased toward basic and acidic residues. Over residues 292 to 302 (YLASMQQQQQA) the composition is skewed to low complexity. 2 stretches are compositionally biased toward polar residues: residues 303–329 (MSNN…ASSP) and 340–350 (PLIQNRTGNQS). Phosphoserine is present on Ser328. A Glycyl lysine isopeptide (Lys-Gly) (interchain with G-Cter in ubiquitin) cross-link involves residue Lys357. A phosphothreonine mark is found at Thr364, Thr366, Thr384, Thr386, and Thr388. The segment covering 384-398 (TKTGTFINSQGTGYR) has biased composition (polar residues). Residues 384–405 (TKTGTFINSQGTGYRQVSDDPN) form a disordered region. Residues Thr395 and Thr415 each carry the phosphothreonine; by PRK1 modification. A compositionally biased stretch (polar residues) spans 418–428 (PSTSVVPTQTG). The tract at residues 418-454 (PSTSVVPTQTGYGFGNQSQQQSQNNGSNNRGYTLIDL) is disordered. Over residues 432 to 446 (GNQSQQQSQNNGSNN) the composition is skewed to low complexity. The segment at 447-454 (RGYTLIDL) is clathrin-binding.

It belongs to the epsin family. In terms of assembly, interacts with EDE1 and PAN1.

The protein resides in the cytoplasm. Its subcellular location is the membrane. In terms of biological role, binds to membranes enriched in phosphatidylinositol 3,5-bisphosphate (PtdIns(3,5)P2) and phosphatidylinositol 4,5-bisphosphate (PtdIns(4,5)P2). Required for endocytosis and localization of actin. Negatively regulated via phosphorylation. The protein is Epsin-1 (ENT1) of Saccharomyces cerevisiae (strain ATCC 204508 / S288c) (Baker's yeast).